A 469-amino-acid chain; its full sequence is 3-isopropylmalate dehydratase large subunit (469 aa).

Positions 347, 410, and 413 each coordinate [4Fe-4S] cluster.

The protein belongs to the aconitase/IPM isomerase family. LeuC type 1 subfamily. In terms of assembly, heterodimer of LeuC and LeuD. Requires [4Fe-4S] cluster as cofactor.

The enzyme catalyses (2R,3S)-3-isopropylmalate = (2S)-2-isopropylmalate. Its pathway is amino-acid biosynthesis; L-leucine biosynthesis; L-leucine from 3-methyl-2-oxobutanoate: step 2/4. In terms of biological role, catalyzes the isomerization between 2-isopropylmalate and 3-isopropylmalate, via the formation of 2-isopropylmaleate. The polypeptide is 3-isopropylmalate dehydratase large subunit (Ralstonia nicotianae (strain ATCC BAA-1114 / GMI1000) (Ralstonia solanacearum)).